A 352-amino-acid chain; its full sequence is uncharacterized protein (352 aa).

This sequence to M.pneumoniae MPN_633 (in the N-terminal section), and M.pneumoniae MPN_634 (in the C-terminal section).

This is an uncharacterized protein from Mycoplasma pneumoniae (strain ATCC 29342 / M129 / Subtype 1) (Mycoplasmoides pneumoniae).